Consider the following 180-residue polypeptide: CASP-like protein 5A1 (180 aa).

Residues 1–36 are Cytoplasmic-facing; the sequence is MEVSHPAVHPVAVPPVLTEPPARVRMKDYQGMPGTL. The helical transmembrane segment at 37-57 threads the bilayer; it reads GGLALRLGQLGFAVLSFSIMV. Residues 58–67 are Extracellular-facing; the sequence is STPDFSQVTA. Residues 68-88 traverse the membrane as a helical segment; it reads FCYLVAATVLQTLWSSITAVV. At 89–102 the chain is on the cytoplasmic side; the sequence is DIYALSVRRSLHHS. Residues 103–123 traverse the membrane as a helical segment; it reads LLVGLFAVGDGVTSTLTFAAA. Residues 124–150 are Extracellular-facing; the sequence is CATAGITVLIDNDLDECGQNHCGRFEA. The helical transmembrane segment at 151–171 threads the bilayer; sequence AAAMAFLSWIMAAPSFLLAFW. At 172–180 the chain is on the cytoplasmic side; sequence SFGNKIVCF.

Belongs to the Casparian strip membrane proteins (CASP) family. In terms of assembly, homodimer and heterodimers.

The protein localises to the cell membrane. The chain is CASP-like protein 5A1 from Pteridium aquilinum subsp. aquilinum (Bracken fern).